The sequence spans 227 residues: Gamma-glutamyl-hercynylcysteine sulfoxide hydrolase (227 aa).

The active-site Nucleophile is the cysteine 2. Residues 2-227 (CRHVAWLGAP…RDAHVVVTPL (226 aa)) enclose the Glutamine amidotransferase type-2 domain.

It catalyses the reaction gamma-L-glutamyl-hercynylcysteine S-oxide + H2O = S-(hercyn-2-yl)-L-cysteine S-oxide + L-glutamate. It functions in the pathway amino-acid biosynthesis; ergothioneine biosynthesis. Its function is as follows. Catalyzes the hydrolysis of the gamma-glutamyl amide bond of hercynyl-gamma-L-glutamyl-L-cysteine sulfoxide to produce hercynylcysteine sulfoxide, a step in the biosynthesis pathway of ergothioneine. This chain is Gamma-glutamyl-hercynylcysteine sulfoxide hydrolase, found in Mycolicibacterium smegmatis (strain ATCC 700084 / mc(2)155) (Mycobacterium smegmatis).